The sequence spans 543 residues: Sodium-dependent lysophosphatidylcholine symporter 1 (543 aa).

A compositionally biased stretch (low complexity) spans 1–14 (MAKGEGAESGSAAG). The interval 1–34 (MAKGEGAESGSAAGLLPTSILQSTERPAQVKKEP) is disordered. Residues 1–40 (MAKGEGAESGSAAGLLPTSILQSTERPAQVKKEPKKKKQQ) are Cytoplasmic-facing. Residues 41–70 (LSVCNKLCYALGGAPYQVTGCALGFFLQIY) traverse the membrane as a helical segment. Residues 71–94 (LLDVAQKDEEVVFCFSSFQVGPFS) lie on the Extracellular side of the membrane. The helical transmembrane segment at 95–115 (ASIILFVGRAWDAITDPLVGL) threads the bilayer. The Cytoplasmic portion of the chain corresponds to 116-127 (CISKSPWTCLGR). The helical transmembrane segment at 128–147 (LMPWIIFSTPLAVIAYFLIW) threads the bilayer. The Extracellular segment spans residues 148 to 157 (FVPDFPHGQT). The helical transmembrane segment at 158 to 182 (YWYLLFYCLFETMVTCFHVPYSALT) threads the bilayer. Over 183–189 (MFISTEQ) the chain is Cytoplasmic. A helical membrane pass occupies residues 190-221 (TERDSATAYRMTVEVLGTVLGTAIQGQIVGQA). Topologically, residues 222–241 (DTPCFQDLNSSTVASQSANH) are extracellular. An intrachain disulfide couples C225 to C473. N-linked (GlcNAc...) asparagine glycosylation is found at N230 and N240. The helical transmembrane segment at 242–275 (THGTTSHRETQKAYLLAAGVIVCIYIICAVILIL) threads the bilayer. Topologically, residues 276 to 306 (GVREQREPYEAQQSEPIAYFRGLRLVMSHGP) are cytoplasmic. Residues 307–333 (YIKLITGFLFTSLAFMLVEGNFVLFCT) form a helical membrane-spanning segment. Residues 334–344 (YTLGFRNEFQN) are Extracellular-facing. Residues 345-363 (LLLAIMLSATLTIPIWQWF) form a helical membrane-spanning segment. Over 364-367 (LTRF) the chain is Cytoplasmic. The helical transmembrane segment at 368–389 (GKKTAVYVGISSAVPFLILVAL) threads the bilayer. Over 390-392 (MES) the chain is Extracellular. Residues 393-429 (NLIITYAVAVAAGISVAAAFLLPWSMLPDVIDDFHLK) form a helical membrane-spanning segment. The Cytoplasmic portion of the chain corresponds to 430–439 (QPHFHGTEPI). The helical transmembrane segment at 440-466 (FFSFYVFFTKFASGVSLGISTLSLDFA) threads the bilayer. Residues 467–478 (GYQTRGCSQPER) are Extracellular-facing. Residues 479–502 (VKFTLNMLVTMAPIVLILLGLLLF) traverse the membrane as a helical segment. The Cytoplasmic portion of the chain corresponds to 503–543 (KMYPIDEERRRQNKKALQALRDEASSSGCSETDSTELASIL).

The protein belongs to the major facilitator superfamily. As to quaternary structure, interacts with ERVFRD-1/syncytin-2. As to expression, in placenta, associated with trophoblast cells.

Its subcellular location is the cell membrane. The protein resides in the endoplasmic reticulum membrane. The catalysed reaction is a 1-acyl-sn-glycero-3-phosphocholine(in) + Na(+)(in) = a 1-acyl-sn-glycero-3-phosphocholine(out) + Na(+)(out). The enzyme catalyses 1-(4Z,7Z,10Z,13Z,16Z,19Z-docosahexaenoyl)-sn-glycero-3-phosphocholine(in) + Na(+)(in) = 1-(4Z,7Z,10Z,13Z,16Z,19Z-docosahexaenoyl)-sn-glycero-3-phosphocholine(out) + Na(+)(out). It catalyses the reaction 1-(9Z-octadecenoyl)-sn-glycero-3-phosphocholine(in) + Na(+)(in) = 1-(9Z-octadecenoyl)-sn-glycero-3-phosphocholine(out) + Na(+)(out). It carries out the reaction 1-hexadecanoyl-sn-glycero-3-phosphocholine(in) + Na(+)(in) = 1-hexadecanoyl-sn-glycero-3-phosphocholine(out) + Na(+)(out). The catalysed reaction is a 1-acyl-sn-glycero-3-phosphoethanolamine(in) + Na(+)(in) = a 1-acyl-sn-glycero-3-phosphoethanolamine(out) + Na(+)(out). In terms of biological role, sodium-dependent lysophosphatidylcholine (LPC) symporter, which plays an essential role for blood-brain barrier formation and function. Specifically expressed in endothelium of the blood-brain barrier of micro-vessels and transports LPC into the brain. Transport of LPC is essential because it constitutes the major mechanism by which docosahexaenoic acid (DHA), an omega-3 fatty acid that is essential for normal brain growth and cognitive function, enters the brain. Transports LPC carrying long-chain fatty acids such LPC oleate and LPC palmitate with a minimum acyl chain length of 14 carbons. Does not transport docosahexaenoic acid in unesterified fatty acid. Specifically required for blood-brain barrier formation and function, probably by mediating lipid transport. Not required for central nervous system vascular morphogenesis. Acts as a transporter for tunicamycin, an inhibitor of asparagine-linked glycosylation. In placenta, acts as a receptor for ERVFRD-1/syncytin-2 and is required for trophoblast fusion. The protein is Sodium-dependent lysophosphatidylcholine symporter 1 of Homo sapiens (Human).